The chain runs to 252 residues: 2-succinyl-6-hydroxy-2,4-cyclohexadiene-1-carboxylate synthase (252 aa).

Belongs to the AB hydrolase superfamily. MenH family. In terms of assembly, monomer.

The catalysed reaction is 5-enolpyruvoyl-6-hydroxy-2-succinyl-cyclohex-3-ene-1-carboxylate = (1R,6R)-6-hydroxy-2-succinyl-cyclohexa-2,4-diene-1-carboxylate + pyruvate. It functions in the pathway quinol/quinone metabolism; 1,4-dihydroxy-2-naphthoate biosynthesis; 1,4-dihydroxy-2-naphthoate from chorismate: step 3/7. Its pathway is quinol/quinone metabolism; menaquinone biosynthesis. Catalyzes a proton abstraction reaction that results in 2,5-elimination of pyruvate from 2-succinyl-5-enolpyruvyl-6-hydroxy-3-cyclohexene-1-carboxylate (SEPHCHC) and the formation of 2-succinyl-6-hydroxy-2,4-cyclohexadiene-1-carboxylate (SHCHC). This is 2-succinyl-6-hydroxy-2,4-cyclohexadiene-1-carboxylate synthase from Salmonella newport (strain SL254).